The following is a 326-amino-acid chain: D-threonate 4-phosphate dehydrogenase (326 aa).

2 residues coordinate substrate: His-138 and Thr-139. 3 residues coordinate a divalent metal cation: His-168, His-212, and His-267. 3 residues coordinate substrate: Lys-275, Asn-284, and Arg-293.

It belongs to the PdxA family. PdxA2 subfamily. Homodimer. A divalent metal cation serves as cofactor.

The enzyme catalyses 4-O-phospho-D-threonate + NAD(+) = dihydroxyacetone phosphate + CO2 + NADH. Catalyzes the NAD-dependent oxidation and subsequent decarboxylation of D-threonate 4-phosphate to produce dihydroxyacetone phosphate (DHAP). Can also use 4-hydroxy-L-threonine 4-phosphate as substrate. This chain is D-threonate 4-phosphate dehydrogenase, found in Pectobacterium atrosepticum (strain SCRI 1043 / ATCC BAA-672) (Erwinia carotovora subsp. atroseptica).